We begin with the raw amino-acid sequence, 828 residues long: MKLSRRSFMKANAVAAAAAAAGLSVPGVARAVVGQQEAIKWDKAPCRFCGTGCGVLVGTQQGRVVACQGDPDAPVNRGLNCIKGYFLPKIMYGKDRLTQPMLRMKDGSYHKDGEFTPVSWEQAFDVMEEKFKTSLKEKGPEAIGMFGSGQWTIWEGYAAAKLFKAGFRSNNIDPNARHCMASAVVGFMRTFGMDEPMGCYDDIEQADAFVLWGSNMAEMHPILWSRITNRRLSDPNVKVAVLSTFQHRSFELADNGIVFTPQSDLVILNYIANYIIQNNAVNQDFFTKHVNLRKGATDIGYGLRPTHPLEKAAKNPGSDASEPMSFDEYKAFVAEYTLDKTAEMTGVPKDQLEQLAQLYADPNKRVISYWTMGFNQHTRGVWANNLVYNLHLLTGKISQPGCGPFSLTGQPSACGTAREVGTFSHRLPADMVVTNEKHRDICEKHWQIPAGTIPAKVGLHAVAQDRALKDGKLNVYWVMCNNNMQAGPNINEDRMPGWRDPRNFIIVSDPYPTVSALSADLILPTAMWVEKEGAYGNAERRTQFWRQQIKAPGEAKSDLWQLVQFSRRFKTEEVWPEALLAQKPELRGKTLYDVLFATPAVSKFPLSELKEEQLNDESRELGFYLQKGLFEEYAWFGRGHGHDLAPFDDYHNARGLRWPVVEGKETQWRYSEGNDPYVKAGEGYKFYGKPDGKAVIFALPFEPAAESPDNEYDLWLSTGRVLEHWHTGSMTRRVPELHRAFPEAVVFIHPLDAKARDLRRGDKVKVSSRRGEVISIVETRGRNRPPQGLVYMPFFDAAQLVNNLTLDATDPLSKETDFKKCAVKLAKV.

A signal peptide (tat-type signal) is located at residues 1 to 31 (MKLSRRSFMKANAVAAAAAAAGLSVPGVARA). Residues 39-95 (IKWDKAPCRFCGTGCGVLVGTQQGRVVACQGDPDAPVNRGLNCIKGYFLPKIMYGKD) enclose the 4Fe-4S Mo/W bis-MGD-type domain. 4 residues coordinate [4Fe-4S] cluster: cysteine 46, cysteine 49, cysteine 53, and cysteine 81. Mo-bis(molybdopterin guanine dinucleotide)-binding positions include lysine 83, glutamine 150, asparagine 175, cysteine 179, 212–219 (WGSNMAEM), 243–247 (STFQH), 262–264 (QSD), methionine 372, glutamine 376, asparagine 482, 508–509 (SD), lysine 531, aspartate 558, and 718–727 (TGRVLEHWHT). A substrate-binding site is contributed by phenylalanine 794. Residues asparagine 802 and lysine 819 each coordinate Mo-bis(molybdopterin guanine dinucleotide).

This sequence belongs to the prokaryotic molybdopterin-containing oxidoreductase family. NasA/NapA/NarB subfamily. In terms of assembly, component of the periplasmic nitrate reductase NapAB complex composed of NapA and NapB. [4Fe-4S] cluster is required as a cofactor. Mo-bis(molybdopterin guanine dinucleotide) serves as cofactor. Predicted to be exported by the Tat system. The position of the signal peptide cleavage has not been experimentally proven.

It localises to the periplasm. It catalyses the reaction 2 Fe(II)-[cytochrome] + nitrate + 2 H(+) = 2 Fe(III)-[cytochrome] + nitrite + H2O. Its function is as follows. Catalytic subunit of the periplasmic nitrate reductase complex NapAB. Receives electrons from NapB and catalyzes the reduction of nitrate to nitrite. This is Periplasmic nitrate reductase from Salmonella schwarzengrund (strain CVM19633).